Reading from the N-terminus, the 278-residue chain is Undecaprenyl-diphosphatase (278 aa).

The next 6 membrane-spanning stretches (helical) occupy residues 49-69 (ANTF…VVFW), 97-117 (HVLI…DFID), 120-140 (LFSI…MIAA), 197-217 (ADFT…LSLV), 226-246 (GDLG…LLSI), and 258-278 (LVPF…IVYM).

The protein belongs to the UppP family.

The protein resides in the cell membrane. The enzyme catalyses di-trans,octa-cis-undecaprenyl diphosphate + H2O = di-trans,octa-cis-undecaprenyl phosphate + phosphate + H(+). In terms of biological role, catalyzes the dephosphorylation of undecaprenyl diphosphate (UPP). Confers resistance to bacitracin. The chain is Undecaprenyl-diphosphatase from Exiguobacterium sibiricum (strain DSM 17290 / CCUG 55495 / CIP 109462 / JCM 13490 / 255-15).